The following is a 484-amino-acid chain: Sperm motility kinase Tcr mutant form (484 aa).

The region spanning 8 to 256 (YEMLETIGQG…VAEVMVHPWV (249 aa)) is the Protein kinase domain. Residues 14–22 (IGQGGCAQV) and Lys37 each bind ATP. Catalysis depends on Asp127, which acts as the Proton acceptor. Disordered regions lie at residues 355-400 (EPTG…TMDQ) and 426-446 (STEG…RGWP). Polar residues predominate over residues 391–400 (PINTTPTMDQ).

The protein belongs to the protein kinase superfamily. Tyr protein kinase family. Smok subfamily. In terms of tissue distribution, testis-specific. Expressed in the testis from 22 days postpartum (22 dpp). Expressed late in spermiogenesis, only in Tcr-containing t-haplotypes.

The enzyme catalyses L-seryl-[protein] + ATP = O-phospho-L-seryl-[protein] + ADP + H(+). The catalysed reaction is L-threonyl-[protein] + ATP = O-phospho-L-threonyl-[protein] + ADP + H(+). Its function is as follows. While the main function of Smoks is to control sperm motility, the role of Smok-Tcr, with reduced kinase activity, is to counterbalance a signaling impairment caused by the distorter/sterility loci, giving t-sperm an advantage in reaching the oocytes. Transmission ratio distortion also called segregation distortion is the name given to the phenomenon above-mentioned. Being associated with the T-complex, it allows males heterozygous for a complete t-haplotype to preferentially transmit the t-haplotype chromosome. This chain is Sperm motility kinase Tcr mutant form (Smoktcr), found in Mus musculus (Mouse).